Here is a 286-residue protein sequence, read N- to C-terminus: Probable tRNA(His) guanylyltransferase (286 aa).

D29, G30, and D76 together coordinate Mg(2+). GTP is bound by residues 29 to 34 and 75 to 76; these read DGKKFH and SD.

Belongs to the tRNA(His) guanylyltransferase family. It depends on Mg(2+) as a cofactor.

The catalysed reaction is a 5'-end ribonucleotide-tRNA(His) + GTP + ATP + H2O = a 5'-end phospho-guanosine-ribonucleotide-tRNA(His) + AMP + 2 diphosphate + H(+). In terms of biological role, adds a GMP to the 5'-end of tRNA(His) after transcription and RNase P cleavage. The chain is Probable tRNA(His) guanylyltransferase from Drosophila melanogaster (Fruit fly).